A 1065-amino-acid polypeptide reads, in one-letter code: N-terminal acetyltransferase B complex auxiliary subunit NAA25 (1065 aa).

A TPR repeat occupies 294-327 (VDKLRIQGRLLARANDYSAAVDVYKKILELSPDD).

Belongs to the MDM20/NAA25 family. Ubiquitously expressed, with a higher expression in vascular bundles, hydathodes, leaf primordia and the base of the trichomes.

It is found in the cytoplasm. In terms of biological role, auxiliary subunit of the NatB N-alpha-acetyltransferase complex. Required for flowering time regulation and for vegetative and reproductive plant development. The sequence is that of N-terminal acetyltransferase B complex auxiliary subunit NAA25 from Arabidopsis thaliana (Mouse-ear cress).